Consider the following 803-residue polypeptide: Volume-regulated anion channel subunit LRRC8C (803 aa).

Residues M1–P22 lie on the Cytoplasmic side of the membrane. The helical transmembrane segment at W23–V47 threads the bilayer. Residues M48–A124 lie on the Extracellular side of the membrane. Disulfide bonds link C54/C308 and C115/C293. N64 and N70 each carry an N-linked (GlcNAc...) asparagine glycan. Residues K125 to F144 traverse the membrane as a helical segment. Topologically, residues W145–Y262 are cytoplasmic. Positions E177–N209 are disordered. The span at N191–N209 shows a compositional bias: polar residues. A phosphoserine mark is found at S212 and S215. A helical transmembrane segment spans residues V263 to V284. Over S285–H314 the chain is Extracellular. The chain crosses the membrane as a helical span at residues L315–Y339. At W340–E803 the chain is on the cytoplasmic side. LRR repeat units follow at residues E397–T420, N421–I443, L446–L466, D467–F488, K490–L513, N515–S537, L541–V563, S565–K587, M588–L611, S613–H635, L636–L659, T660–C682, K684–L705, Q706–C728, K730–L751, F753–C774, and A776–Q799.

It belongs to the LRRC8 family. In terms of assembly, heterohexamer; oligomerizes with other LRRC8 proteins (LRRC8A, LRRC8B, LRRC8D and/or LRRC8E) to form a heterohexamer. Homoheptamer; inactive, likely because it is not targeted to the plasma membrane in the absence of LRRC8A. In vivo, the subunit composition may depend primarily on expression levels, and heterooligomeric channels containing various proportions of the different LRRC8 proteins may coexist. In terms of tissue distribution, expressed at highest levels in skeletal muscle, and at moderate levels in heart, lung and peripheral blood leukocytes.

It is found in the cell membrane. The protein resides in the endoplasmic reticulum membrane. The enzyme catalyses chloride(in) = chloride(out). The catalysed reaction is iodide(out) = iodide(in). It carries out the reaction taurine(out) = taurine(in). It catalyses the reaction 2',3'-cGAMP(out) = 2',3'-cGAMP(in). Non-essential component of the volume-regulated anion channel (VRAC, also named VSOAC channel), an anion channel required to maintain a constant cell volume in response to extracellular or intracellular osmotic changes. The VRAC channel conducts iodide better than chloride and can also conduct organic osmolytes like taurine. Plays a redundant role in the efflux of amino acids, such as aspartate and glutamate, in response to osmotic stress. The VRAC channel also mediates transport of immunoreactive cyclic dinucleotide GMP-AMP (2'-3'-cGAMP), an immune messenger produced in response to DNA virus in the cytosol. Channel activity requires LRRC8A plus at least one other family member (LRRC8B, LRRC8C, LRRC8D or LRRC8E); channel characteristics depend on the precise subunit composition. The polypeptide is Volume-regulated anion channel subunit LRRC8C (Homo sapiens (Human)).